Consider the following 412-residue polypeptide: 2-methylacyl-CoA dehydrogenase, mitochondrial (412 aa).

The N-terminal 25 residues, 1–25, are a transit peptide targeting the mitochondrion; sequence MHKLFAVRSLSSAIVKSFKSLQNQQ. FAD is bound by residues 154–163 and 187–189; these read LAMSEPNAGS and WCT. Serine 163 lines the substrate pocket. Substrate is bound by residues 209 to 210, tyrosine 264, and 271 to 274; these read SK and DLER. The active-site Proton acceptor is glutamate 273. Residues arginine 299, glutamine 310, and 367–371 each bind FAD; that span reads QCLGG. 394–395 provides a ligand contact to substrate; the sequence is AG. Residue 396–398 participates in FAD binding; the sequence is TSE.

Belongs to the acyl-CoA dehydrogenase family. As to quaternary structure, homotetramer. The cofactor is FAD. In terms of tissue distribution, expressed in flowers.

The protein resides in the mitochondrion. It catalyses the reaction 2-methylbutanoyl-CoA + oxidized [electron-transfer flavoprotein] + H(+) = (2E)-2-methylbut-2-enoyl-CoA + reduced [electron-transfer flavoprotein]. Its function is as follows. Short/branched-chain acyl-CoA dehydrogenase (SBCAD). Uses 2-methylbutanoyl-CoA as substrate. Minor activity with the straight-chain substrates, butanoyl-CoA, valeryl-CoA, hexanoyl-CoA, and octanoyl-CoA but no activity with isovaleryl-CoA. This is 2-methylacyl-CoA dehydrogenase, mitochondrial (2MBCD) from Solanum tuberosum (Potato).